The following is a 233-amino-acid chain: VIGGDECNINEHPFLVLVYYDDYQCGGTLINEEWVLTAAHCNGKNMEIYLGVHSKKVPNKDVQRRVPKEKFFCDSSKTYTKWNKDIMLIRLDRPVRKSAHIAPLSLPSSPPSVGSVCRVMGWGTITSPQETYPDVPHCAKINLLDYSECRAAYPGLPPKSRTLCAGVLEGGKDTCGGDSGGPLICNGQFQGIVSWGGDPCAQPHEPGSYTNVFDHLDWIKGIIAGNTDATCPL.

The Peptidase S1 domain occupies 1-224; sequence VIGGDECNIN…HLDWIKGIIA (224 aa). Disulfide bonds link Cys7/Cys138, Cys25/Cys41, Cys73/Cys231, Cys117/Cys185, Cys149/Cys164, and Cys175/Cys200. Catalysis depends on charge relay system residues His40 and Asp85. Catalysis depends on Ser179, which acts as the Charge relay system.

The protein belongs to the peptidase S1 family. Snake venom subfamily. As to quaternary structure, monomer. In terms of tissue distribution, expressed by the venom gland.

The protein localises to the secreted. Thrombin-like snake venom serine protease that clots rabbit fibrinogen. Only the beta chain of fibrinogen (FGB) is cleaved, releasing fibrinopeptide B. Incubation with human fibrinogen alpha and beta resulted in cleavage of both fibrinogen chains but generated neither fibrinopeptide A nor fibrinopeptide B. Promotes clotting of rabbit fibrinogen, but not bovine or human fibrinogen. In Protobothrops elegans (Elegant pitviper), this protein is Thrombin-like enzyme elegaxobin-1.